The sequence spans 260 residues: tRNA pseudouridine synthase A (260 aa).

The active-site Nucleophile is Asp-52. Substrate is bound at residue Tyr-111.

The protein belongs to the tRNA pseudouridine synthase TruA family. Homodimer.

It carries out the reaction uridine(38/39/40) in tRNA = pseudouridine(38/39/40) in tRNA. In terms of biological role, formation of pseudouridine at positions 38, 39 and 40 in the anticodon stem and loop of transfer RNAs. The sequence is that of tRNA pseudouridine synthase A from Roseobacter denitrificans (strain ATCC 33942 / OCh 114) (Erythrobacter sp. (strain OCh 114)).